The following is a 477-amino-acid chain: Regulator of G-protein signaling 7 (477 aa).

Residues 37–112 enclose the DEP domain; sequence EKNGIPIRTV…DDGTFYRFQT (76 aa). Residues S229 and S241 each carry the phosphoserine modification. Residues 236–257 are disordered; it reads DIRSHSPTHTPTPETKPPTEDE. Position 243 is a phosphothreonine (T243). The G protein gamma domain occupies 255–316; the sequence is EDELHRQIKY…LSDDTTFWEL (62 aa). An RGS domain is found at 333–448; it reads GMDEALKDPV…IRSSAYQELL (116 aa). At S434 the chain carries Phosphoserine.

As to quaternary structure, interacts with GNB5, forming the RGS7-GNB5 complex. Interacts with GPR158; promotes the GTPase activator activity of the RGS7-GNB5 complex in absence of glycine, in contrast GTPase activator activity of the RGS7-GNB5 complex is inhibited in presence of glycine. Interacts with GPR179. Interacts with PKD1; this prevents rapid proteasomal degradation. Interacts with RGS7BP, leading to regulate the subcellular location of the heterodimer formed with GNB5. Interacts (phosphorylated form) with 14-3-3 protein YWHAQ. Interacts with SNAPIN. Interacts with GNAI1. Interacts with GNAO1, GNAI3 and GNAZ. Palmitoylated. In terms of processing, ubiquitinated, leading to rapid proteasomal degradation. Post-translationally, phosphorylation and subsequent interaction with 14-3-3 proteins inhibits GAP activity. Brain-specific. Predominantly cerebellar granule cells.

The protein localises to the cytoplasm. The protein resides in the cytosol. It is found in the cell membrane. It localises to the membrane. In terms of biological role, GTPase activator component of the RGS7-GNB5 complex that regulates G protein-coupled receptor signaling cascades. The RGS7-GNB5 complex acts as an inhibitor signal transduction by promoting the GTPase activity of G protein alpha subunits, such as GNAO1, thereby driving them into their inactive GDP-bound form. May play a role in synaptic vesicle exocytosis. Glycine-dependent regulation of the RGS7-GNB5 complex by GPR158 affects mood and cognition via its ability to regulate neuronal excitability in L2/L3 pyramidal neurons of the prefrontal cortex. Modulates the activity of potassium channels that are activated by GNAO1 in response to muscarinic acetylcholine receptor M2/CHRM2 signaling. The polypeptide is Regulator of G-protein signaling 7 (Rgs7) (Rattus norvegicus (Rat)).